Here is a 129-residue protein sequence, read N- to C-terminus: Large ribosomal subunit protein bL21 (129 aa).

It belongs to the bacterial ribosomal protein bL21 family. Part of the 50S ribosomal subunit. Contacts protein L20.

Its function is as follows. This protein binds to 23S rRNA in the presence of protein L20. This chain is Large ribosomal subunit protein bL21, found in Microcystis aeruginosa (strain NIES-843 / IAM M-2473).